Consider the following 194-residue polypeptide: Serine/threonine-protein kinase mos (194 aa).

The region spanning 47–194 is the Protein kinase domain; the sequence is LCLLNLLGSG…HLDLKPANIF (148 aa). Residues 53–61 and lysine 74 each bind ATP; that span reads LGSGGFGSV. Aspartate 187 (proton acceptor) is an active-site residue.

This sequence belongs to the protein kinase superfamily. Ser/Thr protein kinase family.

The catalysed reaction is L-seryl-[protein] + ATP = O-phospho-L-seryl-[protein] + ADP + H(+). It carries out the reaction L-threonyl-[protein] + ATP = O-phospho-L-threonyl-[protein] + ADP + H(+). The sequence is that of Serine/threonine-protein kinase mos (MOS) from Dendroaspis angusticeps (Eastern green mamba).